Reading from the N-terminus, the 427-residue chain is O-methyltransferase PaMT (427 aa).

S-adenosyl-L-methionine-binding residues include W230 and D281. The active-site Proton acceptor is the H326.

The protein belongs to the class I-like SAM-binding methyltransferase superfamily. Cation-independent O-methyltransferase family. COMT subfamily. S-adenosyl-L-methionine is required as a cofactor.

Its pathway is mycotoxin biosynthesis. Functionally, O-methyltransferase; part of the 2 gene clusters that mediate the biosynthesis of fusicoccins, diterpene glucosides that display phytohormone-like activity and function as potent activators of plasma membrane H(+)-ATPases in plants by modifying 14-3-3 proteins and cause the plant disease constriction canker. The first step in the pathway is performed by the fusicoccadiene synthase PaFS that possesses both prenyl transferase and terpene cyclase activity, converting isopentenyl diphosphate and dimethylallyl diphosphate into geranylgeranyl diphosphate (GGDP) and successively converting GGDP into fusicocca-2,10(14)-diene, a precursor for fusicoccin H. The second step is the oxidation at the C-8 position by the cytochrome P450 monooxygenase PaP450-2 to yield fusicocca-2,10(14)-diene-8-beta-ol. The cytochrome P450 monooxygenase PaP450-1 then catalyzes the hydroxylation at the C-16 position to produce fusicocca-2,10(14)-diene-8-beta,16-diol. The dioxygenase fc-dox then catalyzes the 16-oxydation of fusicocca-2,10(14)-diene-8-beta,16-diol to yield an aldehyde (8-beta-hydroxyfusicocca-1,10(14)-dien-16-al). The short-chain dehydrogenase/reductase fc-sdr catalyzes the reduction of the aldehyde to yield fusicocca-1,10(14)-diene-8-beta,16-diol. The next step is the hydroxylation at C-9 performed by the cytochrome P450 monooxygenase PaP450-3 that leads to fusicoccin H aglycon which is glycosylated to fusicoccin H by the O-glycosyltransferase PaGT. Hydroxylation at C-12 by the cytochrome P450 monooxygenase PaP450-4 leads then to the production of fusicoccin Q and is followed by methylation by the O-methyltransferase PaMT to yield fusicoccin P. Fusicoccin P is further converted to fusicoccin J via prenylation by the O-glucose prenyltransferase PaPT. Cytochrome P450 monooxygenase PaP450-5 then performs hydroxylation at C-19 to yield dideacetyl-fusicoccin A which is acetylated to 3'-O-deacetyl-fusicoccin A by the O-acetyltransferase PaAT-2. Finally, a another acetylation by the O-acetyltransferase PaAT-1 yields fusicoccin A. The protein is O-methyltransferase PaMT of Phomopsis amygdali (Fusicoccum amygdali).